The following is a 304-amino-acid chain: Acetylglutamate kinase (304 aa).

Substrate-binding positions include 71 to 72 (GG), R93, and N193.

The protein belongs to the acetylglutamate kinase family. ArgB subfamily.

The protein resides in the cytoplasm. It catalyses the reaction N-acetyl-L-glutamate + ATP = N-acetyl-L-glutamyl 5-phosphate + ADP. The protein operates within amino-acid biosynthesis; L-arginine biosynthesis; N(2)-acetyl-L-ornithine from L-glutamate: step 2/4. Catalyzes the ATP-dependent phosphorylation of N-acetyl-L-glutamate. The sequence is that of Acetylglutamate kinase from Streptomyces avermitilis (strain ATCC 31267 / DSM 46492 / JCM 5070 / NBRC 14893 / NCIMB 12804 / NRRL 8165 / MA-4680).